Consider the following 445-residue polypeptide: Lipid A 1-phosphatase (445 aa).

The signal sequence occupies residues Met-1–Ala-22.

Its subcellular location is the periplasm. Its pathway is bacterial outer membrane biogenesis; LPS lipid A biosynthesis. Removes the 1-phosphate group from lipid A species. Absence of phosphate groups in lipid A renders the bacteria resistant to host-derived cationic antimicrobial peptides (CAMP) and allowing it to camouflage itself from the host innate immune response. The sequence is that of Lipid A 1-phosphatase from Porphyromonas gingivalis (strain ATCC 33277 / DSM 20709 / CIP 103683 / JCM 12257 / NCTC 11834 / 2561).